Consider the following 403-residue polypeptide: Chromatin structure-remodeling complex subunit SFH1 (403 aa).

A disordered region spans residues 58–115 (FPTFDIDSDSNDEEQSSASAGNDDPQANANGGEAAGVNGQGSGDGGSANTGAGRHGKS). The segment covering 63-72 (IDSDSNDEEQ) has biased composition (acidic residues). Over residues 84–94 (ANANGGEAAGV) the composition is skewed to low complexity. The segment covering 95-105 (NGQGSGDGGSA) has biased composition (gly residues).

It belongs to the SNF5 family.

The protein resides in the nucleus. In terms of biological role, part of the chromatin structure-remodeling complex (RSC) which is involved in transcription regulation and nucleosome positioning. RSC is responsible for the transfer of a histone octamer from a nucleosome core particle to naked DNA. The reaction requires ATP and involves an activated RSC-nucleosome intermediate. Remodeling reaction also involves DNA translocation, DNA twist and conformational change. As a reconfigurer of centromeric and flanking nucleosomes, RSC complex is required both for proper kinetochore function in chromosome segregation and, via a PKC1-dependent signaling pathway, for organization of the cellular cytoskeleton. This subunit is essential for mitotic growth and required for cell cycle progression. The polypeptide is Chromatin structure-remodeling complex subunit SFH1 (SFH1) (Candida glabrata (strain ATCC 2001 / BCRC 20586 / JCM 3761 / NBRC 0622 / NRRL Y-65 / CBS 138) (Yeast)).